Consider the following 81-residue polypeptide: EC protein I/II (81 aa).

Belongs to the metallothionein superfamily. Type 15 family.

Its function is as follows. Binds 5 molecules of zinc. May have a role in Zn(2+) homeostasis during embryogenesis. The sequence is that of EC protein I/II from Triticum aestivum (Wheat).